The sequence spans 135 residues: Mediator of RNA polymerase II transcription subunit 10 (135 aa).

The protein belongs to the Mediator complex subunit 10 family. As to quaternary structure, component of the Mediator complex, which is composed of MED1, MED4, MED6, MED7, MED8, MED9, MED10, MED11, MED12, MED13, MED13L, MED14, MED15, MED16, MED17, MED18, MED19, MED20, MED21, MED22, MED23, MED24, MED25, MED26, MED27, MED29, MED30, MED31, CCNC, CDK8 and CDC2L6/CDK11. The MED12, MED13, CCNC and CDK8 subunits form a distinct module termed the CDK8 module. Mediator containing the CDK8 module is less active than Mediator lacking this module in supporting transcriptional activation. Individual preparations of the Mediator complex lacking one or more distinct subunits have been variously termed ARC, CRSP, DRIP, PC2, SMCC and TRAP.

The protein resides in the nucleus. Functionally, component of the Mediator complex, a coactivator involved in the regulated transcription of nearly all RNA polymerase II-dependent genes. Mediator functions as a bridge to convey information from gene-specific regulatory proteins to the basal RNA polymerase II transcription machinery. Mediator is recruited to promoters by direct interactions with regulatory proteins and serves as a scaffold for the assembly of a functional preinitiation complex with RNA polymerase II and the general transcription factors. The sequence is that of Mediator of RNA polymerase II transcription subunit 10 (Med10) from Mus musculus (Mouse).